Reading from the N-terminus, the 436-residue chain is ABC transporter permease YtrF (436 aa).

Residues 1–31 (MRFKDQVHFIRRNMKKNRLRVFMTILATTMA) form the signal peptide. Residue Cys-32 is the site of N-palmitoyl cysteine attachment. Cys-32 is lipidated: S-diacylglycerol cysteine. A coiled-coil region spans residues 115-165 (NMNDELKANMELEKGRVAKSENEIVVGYDFAKRLLTKKESEEYNKKIEEAK). Helical transmembrane passes span 293-313 (FKIG…IGIF), 350-370 (YIGI…SYLV), and 396-416 (IPAS…VISG).

Belongs to the ABC-4 integral membrane protein family. The complex is composed of 2 ATP-binding proteins (YtrB and YtrE), 2 transmembrane proteins (YtrC and YtrD) and a solute-binding protein (YtrF).

The protein resides in the cell membrane. In terms of biological role, part of the ABC transporter complex YtrBCDEF that plays a role in acetoin utilization during stationary phase and sporulation. The polypeptide is ABC transporter permease YtrF (ytrF) (Bacillus subtilis (strain 168)).